Consider the following 284-residue polypeptide: Tropomyosin (284 aa).

The stretch at 1 to 284 (MDAIKKKMVA…DATFAELAGY (284 aa)) forms a coiled coil. Basic and acidic residues predominate over residues 32-41 (TEEAKAKIED). Positions 32-60 (TEEAKAKIEDDYNSLQKKSIQTENDLDNT) are disordered. The span at 44–60 (NSLQKKSIQTENDLDNT) shows a compositional bias: polar residues.

It belongs to the tropomyosin family. As to quaternary structure, homodimer.

In terms of biological role, tropomyosin, in association with the troponin complex, plays a central role in the calcium dependent regulation of muscle contraction. This Mytilus edulis (Blue mussel) protein is Tropomyosin.